Consider the following 432-residue polypeptide: Serine/threonine-protein phosphatase 2A activator 1 (432 aa).

This sequence belongs to the PTPA-type PPIase family.

The protein localises to the cytoplasm. It localises to the nucleus. It catalyses the reaction [protein]-peptidylproline (omega=180) = [protein]-peptidylproline (omega=0). Functionally, PPIases accelerate the folding of proteins. It catalyzes the cis-trans isomerization of proline imidic peptide bonds in oligopeptides. Acts as a regulatory subunit for PP2A-like phosphatases modulating their activity or substrate specificity, probably by inducing a conformational change in the catalytic subunit, a direct target of the PPIase. Can reactivate inactive phosphatase PP2A-phosphatase methylesterase complexes (PP2Ai) in presence of ATP and Mg(2+) by dissociating the inactive form from the complex. The chain is Serine/threonine-protein phosphatase 2A activator 1 (rrd1) from Emericella nidulans (strain FGSC A4 / ATCC 38163 / CBS 112.46 / NRRL 194 / M139) (Aspergillus nidulans).